The following is a 116-amino-acid chain: Large ribosomal subunit protein uL24 (116 aa).

It belongs to the universal ribosomal protein uL24 family. As to quaternary structure, part of the 50S ribosomal subunit.

One of two assembly initiator proteins, it binds directly to the 5'-end of the 23S rRNA, where it nucleates assembly of the 50S subunit. Functionally, located at the polypeptide exit tunnel on the outside of the subunit. The protein is Large ribosomal subunit protein uL24 of Methanosarcina barkeri (strain Fusaro / DSM 804).